A 685-amino-acid chain; its full sequence is UvrABC system protein B (685 aa).

The Helicase ATP-binding domain maps to 39–420 (EGIGDGLMYQ…TYEAEHQGQV (382 aa)). 52–59 (GVTGSGKT) is a binding site for ATP. The short motif at 105–128 (YYDYYQPEAYVPSRDLFIEKDSSI) is the Beta-hairpin element. A Helicase C-terminal domain is found at 443–596 (QVDDLLSEAK…QIAFNQANGI (154 aa)). Residues 640-675 (AKSIRKLEKEMQEHARNLEFEKAAAARDELFRLRQR) enclose the UVR domain.

It belongs to the UvrB family. As to quaternary structure, forms a heterotetramer with UvrA during the search for lesions. Interacts with UvrC in an incision complex.

It is found in the cytoplasm. Its function is as follows. The UvrABC repair system catalyzes the recognition and processing of DNA lesions. A damage recognition complex composed of 2 UvrA and 2 UvrB subunits scans DNA for abnormalities. Upon binding of the UvrA(2)B(2) complex to a putative damaged site, the DNA wraps around one UvrB monomer. DNA wrap is dependent on ATP binding by UvrB and probably causes local melting of the DNA helix, facilitating insertion of UvrB beta-hairpin between the DNA strands. Then UvrB probes one DNA strand for the presence of a lesion. If a lesion is found the UvrA subunits dissociate and the UvrB-DNA preincision complex is formed. This complex is subsequently bound by UvrC and the second UvrB is released. If no lesion is found, the DNA wraps around the other UvrB subunit that will check the other stand for damage. This Aromatoleum aromaticum (strain DSM 19018 / LMG 30748 / EbN1) (Azoarcus sp. (strain EbN1)) protein is UvrABC system protein B.